The chain runs to 590 residues: 4-oxocyclohex-2-ene-1-carboxylate 5-dehydrogenase (590 aa).

It belongs to the FAD-dependent oxidoreductase 2 family. In terms of assembly, forms multimers. FAD serves as cofactor.

The catalysed reaction is 4-oxocyclohex-2-ene-1-carboxylate + NAD(+) = 4-oxocyclohexa-2,5-diene-1-carboxylate + NADH + H(+). Functionally, desaturase involved in a cyclohexanecarboxylate (CHCA) degradation pathway. Probably catalyzes the conversion of 4-oxocyclohexenecarboxylate to 4-oxocyclohex-2,5-dienecarboxylate, which is spontaneously isomerized to 4-hydroxybenzoate (4-HBA). This Sinomonas cyclohexanicum (Corynebacterium cyclohexanicum) protein is 4-oxocyclohex-2-ene-1-carboxylate 5-dehydrogenase.